A 130-amino-acid polypeptide reads, in one-letter code: Large ribosomal subunit protein bL20 (130 aa).

It belongs to the bacterial ribosomal protein bL20 family.

Binds directly to 23S ribosomal RNA and is necessary for the in vitro assembly process of the 50S ribosomal subunit. It is not involved in the protein synthesizing functions of that subunit. The protein is Large ribosomal subunit protein bL20 of Nocardioides sp. (strain ATCC BAA-499 / JS614).